Consider the following 514-residue polypeptide: MKDFTEQEKIIVLDFGSQYNQLITRRIREFGVYSELHPHTITVEEMKALNPTGIIFSGGPNSVYDEDAFRADERIFDMGIPILGICYGMQLMTTHFGGKVERAKDREYGKADIHVEKPNRLFAGLPTDQVVWMSHGDLVVEEPAGFEVTITSKSCPIAGIADEERSLYGVQFHPEVRHSVYGNELLKNFALNVCGCKGDWTMENFSEVEIAKIQEIVGDKKVLLALSGGVDSSVVGVLIHKAIGDQLTCIFVDHGLLRKGEADQVMATLQGEFNMNIIKVDAKKRFMDKLAGVSDPEQKRKIIGNEFIYVFDDEANKLDGVEFLAQGTLYTDIIESGTATAQTIKSHHNVGGLPEDMQFKLIEPLNTLFKDEVRALGTELGMPDAIVWRQPFPGPGLGIRVLGEITEEKLEIVRDSDYILREEIKNAGLEREIWQYFTALPNIRSVGVMGDGRTYDHTVVVRAVTSIDGMTADWARIPWDVLEKISVRIVNEVDHVNRVVYDITSKPPATVEWE.

A Glutamine amidotransferase type-1 domain is found at 9–199 (KIIVLDFGSQ…ALNVCGCKGD (191 aa)). The active-site Nucleophile is Cys86. Residues His173 and Glu175 contribute to the active site. Residues 200–389 (WTMENFSEVE…LGMPDAIVWR (190 aa)) form the GMPS ATP-PPase domain. ATP is bound at residue 227–233 (SGGVDSS).

In terms of assembly, homodimer.

It catalyses the reaction XMP + L-glutamine + ATP + H2O = GMP + L-glutamate + AMP + diphosphate + 2 H(+). It functions in the pathway purine metabolism; GMP biosynthesis; GMP from XMP (L-Gln route): step 1/1. In terms of biological role, catalyzes the synthesis of GMP from XMP. This Listeria monocytogenes serotype 4b (strain F2365) protein is GMP synthase [glutamine-hydrolyzing].